We begin with the raw amino-acid sequence, 407 residues long: Melanoma-associated antigen B6B (407 aa).

A compositionally biased stretch (basic residues) spans 1–16 (MPRGQKSKLRARGKRR). Residues 1–185 (MPRGQKSKLR…ESLSSSKRAA (185 aa)) form a disordered region. Polar residues-rich tracts occupy residues 56 to 68 (SGSSVPQESQGAS) and 94 to 109 (PSTSRDASVSQESQGA). The segment covering 123–132 (KSDEAAKGQN) has biased composition (basic and acidic residues). The span at 133-155 (EKSPSTSRDASVPQESQGASPTG) shows a compositional bias: polar residues. Residues 195–394 (IKRKANKMVQ…GLYPHLYEDA (200 aa)) form the MAGE domain.

This Homo sapiens (Human) protein is Melanoma-associated antigen B6B.